We begin with the raw amino-acid sequence, 88 residues long: Early E1B 9 kDa protein (88 aa).

The tract at residues N23 to P88 is disordered. A compositionally biased stretch (low complexity) spans R34 to S44.

The chain is Early E1B 9 kDa protein from Homo sapiens (Human).